Reading from the N-terminus, the 308-residue chain is GTPase Era (308 aa).

In terms of domain architecture, Era-type G spans 9–179 (RAGFVALIGE…RAWLGASLPE (171 aa)). Residues 17-24 (GEPNAGKS) form a G1 region. 17–24 (GEPNAGKS) serves as a coordination point for GTP. Residues 43 to 47 (QTTRA) form a G2 region. Positions 64–67 (DTPG) are G3. GTP is bound by residues 64-68 (DTPGL) and 129-132 (NKID). Residues 129-132 (NKID) form a G4 region. The G5 stretch occupies residues 158 to 160 (ISA). Residues 210–287 (LHQELPYQLT…HLFLQVKVRP (78 aa)) enclose the KH type-2 domain.

It belongs to the TRAFAC class TrmE-Era-EngA-EngB-Septin-like GTPase superfamily. Era GTPase family. Monomer.

The protein localises to the cytoplasm. The protein resides in the cell inner membrane. In terms of biological role, an essential GTPase that binds both GDP and GTP, with rapid nucleotide exchange. Plays a role in 16S rRNA processing and 30S ribosomal subunit biogenesis and possibly also in cell cycle regulation and energy metabolism. The sequence is that of GTPase Era from Dinoroseobacter shibae (strain DSM 16493 / NCIMB 14021 / DFL 12).